A 210-amino-acid chain; its full sequence is Orotate phosphoribosyltransferase (210 aa).

Residues Arg-94, Lys-98, His-100, and 120–128 contribute to the 5-phospho-alpha-D-ribose 1-diphosphate site; that span reads EDLISTGGS. An orotate-binding site is contributed by Ser-124.

Belongs to the purine/pyrimidine phosphoribosyltransferase family. PyrE subfamily. As to quaternary structure, homodimer. Requires Mg(2+) as cofactor.

It catalyses the reaction orotidine 5'-phosphate + diphosphate = orotate + 5-phospho-alpha-D-ribose 1-diphosphate. It participates in pyrimidine metabolism; UMP biosynthesis via de novo pathway; UMP from orotate: step 1/2. Catalyzes the transfer of a ribosyl phosphate group from 5-phosphoribose 1-diphosphate to orotate, leading to the formation of orotidine monophosphate (OMP). The sequence is that of Orotate phosphoribosyltransferase from Bacillus cytotoxicus (strain DSM 22905 / CIP 110041 / 391-98 / NVH 391-98).